The following is a 514-amino-acid chain: 2,3-bisphosphoglycerate-independent phosphoglycerate mutase (514 aa).

Residues D14 and S64 each contribute to the Mn(2+) site. S64 functions as the Phosphoserine intermediate in the catalytic mechanism. Substrate is bound by residues H125, 155-156, R187, R193, 263-266, and K336; these read RD and RADR. Residues D403, H407, D444, H445, and H463 each contribute to the Mn(2+) site.

Belongs to the BPG-independent phosphoglycerate mutase family. As to quaternary structure, monomer. The cofactor is Mn(2+).

The enzyme catalyses (2R)-2-phosphoglycerate = (2R)-3-phosphoglycerate. It functions in the pathway carbohydrate degradation; glycolysis; pyruvate from D-glyceraldehyde 3-phosphate: step 3/5. In terms of biological role, catalyzes the interconversion of 2-phosphoglycerate and 3-phosphoglycerate. The protein is 2,3-bisphosphoglycerate-independent phosphoglycerate mutase of Escherichia coli O6:H1 (strain CFT073 / ATCC 700928 / UPEC).